The primary structure comprises 192 residues: Guanylate kinase (192 aa).

One can recognise a Guanylate kinase-like domain in the interval 7–185; sequence GLIIILSSPS…TLKKIHEIIV (179 aa). 14–21 contacts ATP; that stretch reads SPSGTGKS.

This sequence belongs to the guanylate kinase family.

The protein resides in the cytoplasm. The enzyme catalyses GMP + ATP = GDP + ADP. Functionally, essential for recycling GMP and indirectly, cGMP. The sequence is that of Guanylate kinase from Rickettsia felis (strain ATCC VR-1525 / URRWXCal2) (Rickettsia azadi).